Here is a 463-residue protein sequence, read N- to C-terminus: Nicotinate phosphoribosyltransferase pncB2 (463 aa).

Phosphohistidine is present on His-202.

This sequence belongs to the NAPRTase family. Post-translationally, transiently phosphorylated on a His residue during the reaction cycle. Phosphorylation strongly increases the affinity for substrates and increases the rate of nicotinate D-ribonucleotide production. Dephosphorylation regenerates the low-affinity form of the enzyme, leading to product release.

It catalyses the reaction nicotinate + 5-phospho-alpha-D-ribose 1-diphosphate + ATP + H2O = nicotinate beta-D-ribonucleotide + ADP + phosphate + diphosphate. The protein operates within cofactor biosynthesis; NAD(+) biosynthesis; nicotinate D-ribonucleotide from nicotinate: step 1/1. Involved in the Preiss-Handler pathway, which is a recycling route that permits the salvage of free nicotinamide (NM) and nicotinic acid (Na) involved in the NAD biosynthesis. Catalyzes the synthesis of beta-nicotinate D-ribonucleotide from nicotinate and 5-phospho-D-ribose 1-phosphate at the expense of ATP. It is not able to use nicotinamide. PncB2 appears to be responsible for the increased salvage synthesis of NAD during infection of host tissues. The polypeptide is Nicotinate phosphoribosyltransferase pncB2 (pncB2) (Mycobacterium tuberculosis (strain CDC 1551 / Oshkosh)).